The following is a 163-amino-acid chain: Photosystem II extrinsic protein V (163 aa).

The signal sequence occupies residues 1–26 (MLKKCVWLAVALCLCLWQFTMGTALA). H67 and H118 together coordinate heme c.

Belongs to the cytochrome c family. PsbV subfamily. As to quaternary structure, PSII is composed of 1 copy each of membrane proteins PsbA, PsbB, PsbC, PsbD, PsbE, PsbF, PsbH, PsbI, PsbJ, PsbK, PsbL, PsbM, PsbT, PsbX, PsbY, PsbZ, Psb30/Ycf12, peripheral proteins PsbO, CyanoQ (PsbQ), PsbU, PsbV and a large number of cofactors. It forms dimeric complexes. Requires heme c as cofactor.

It localises to the cellular thylakoid membrane. Its function is as follows. One of the extrinsic, lumenal subunits of photosystem II (PSII). PSII is a light-driven water plastoquinone oxidoreductase, using light energy to abstract electrons from H(2)O, generating a proton gradient subsequently used for ATP formation. The extrinsic proteins stabilize the structure of photosystem II oxygen-evolving complex (OEC), the ion environment of oxygen evolution and protect the OEC against heat-induced inactivation. Low-potential cytochrome c that plays a role in the OEC of PSII. This chain is Photosystem II extrinsic protein V, found in Thermosynechococcus vestitus (strain NIES-2133 / IAM M-273 / BP-1).